Reading from the N-terminus, the 370-residue chain is DNA replication and repair protein RecF (370 aa).

Residue Gly-30–Thr-37 coordinates ATP.

Belongs to the RecF family.

The protein resides in the cytoplasm. Its function is as follows. The RecF protein is involved in DNA metabolism; it is required for DNA replication and normal SOS inducibility. RecF binds preferentially to single-stranded, linear DNA. It also seems to bind ATP. This Staphylococcus aureus (strain bovine RF122 / ET3-1) protein is DNA replication and repair protein RecF.